Here is a 392-residue protein sequence, read N- to C-terminus: Heavy metal-associated isoprenylated plant protein 6 (392 aa).

Basic and acidic residues predominate over residues 1–19; sequence MGEKKEETATKPQGEKKPT. Residues 1–22 are disordered; the sequence is MGEKKEETATKPQGEKKPTDGG. The region spanning 23 to 86 is the HMA 1 domain; the sequence is ITTVVMKLDM…KVADKIKRPV (64 aa). Positions 34 and 37 each coordinate Cd(2+). Residues 89-157 are disordered; that stretch reads VSTVAPPKKE…PPPPKESTVV (69 aa). A compositionally biased stretch (basic and acidic residues) spans 106–145; the sequence is AEKKPSPAAEEKPAEKKPAAVEKPGEKKEEKKKEEGEKKA. An HMA 2 domain is found at 153-216; that stretch reads ESTVVLKTKL…YLNEKLKRTV (64 aa). The Cd(2+) site is built by C164 and C167. Basic and acidic residues predominate over residues 258–270; the sequence is KKVDGGGEKKKEV. Disordered stretches follow at residues 258–285 and 350–392; these read KKVD…GGDG and GQGY…CSVM. Residues 272–285 are compositionally biased toward gly residues; sequence VGGGGGGGGGGGDG. Residue C389 is modified to Cysteine methyl ester. A lipid anchor (S-farnesyl cysteine) is attached at C389. A propeptide spans 390–392 (removed in mature form); the sequence is SVM.

The protein belongs to the HIPP family. As to expression, expressed in petioles, hypocotyls, peduncles, vascular bundles and root meristems.

It localises to the cell membrane. In terms of biological role, heavy-metal-binding protein. Involved in the maintenance of heavy metal homeostasis and/or in detoxification. This chain is Heavy metal-associated isoprenylated plant protein 6, found in Arabidopsis thaliana (Mouse-ear cress).